We begin with the raw amino-acid sequence, 588 residues long: Pectinesterase 4 (588 aa).

The signal sequence occupies residues 1-24 (MIGKVVVSVASILLIVGVAIGVVA). 3 N-linked (GlcNAc...) asparagine glycosylation sites follow: asparagine 86, asparagine 206, and asparagine 342. Substrate contacts are provided by threonine 353 and glutamine 383. Catalysis depends on aspartate 406, which acts as the Proton donor. Aspartate 427 acts as the Nucleophile in catalysis. Residues arginine 496 and tryptophan 498 each contribute to the substrate site.

The protein in the N-terminal section; belongs to the PMEI family. In the C-terminal section; belongs to the pectinesterase family. As to expression, expressed in pollen grains and pollen tubes.

It is found in the secreted. The protein resides in the cell wall. It carries out the reaction [(1-&gt;4)-alpha-D-galacturonosyl methyl ester](n) + n H2O = [(1-&gt;4)-alpha-D-galacturonosyl](n) + n methanol + n H(+). It functions in the pathway glycan metabolism; pectin degradation; 2-dehydro-3-deoxy-D-gluconate from pectin: step 1/5. In terms of biological role, acts in the modification of cell walls via demethylesterification of cell wall pectin. Plays an important role in growth of pollen tubes in female floral tissues, possibly via enhancing the interaction between the pollen tube and female floral tissues by modification of the cell walls. This chain is Pectinesterase 4 (PME4), found in Arabidopsis thaliana (Mouse-ear cress).